A 604-amino-acid polypeptide reads, in one-letter code: Transcriptional repressor rco-1 (604 aa).

2 disordered regions span residues 87–110 (RGGA…PAIG) and 124–264 (GGQA…DRLP). Residues 144 to 163 (MPAPPGLQGPPPPPPPPSQQ) are compositionally biased toward pro residues. Composition is skewed to low complexity over residues 164-177 (PPFQ…QGPG) and 190-209 (PGPA…PATP). The span at 210–229 (QINTPIPYNGGPAQSPQVPT) shows a compositional bias: polar residues. WD repeat units follow at residues 295–324 (QHES…QIYD), 342–372 (TGDL…RVWD), 384–414 (GHEQ…RLWD), 425–455 (SIED…RVWD), 469–499 (GHKD…KMWE), 523–553 (GHRD…QFWD), and 565–600 (GHKN…RIWS).

Its function is as follows. Represses transcription by RNA polymerase II. May be involved at several stages of conidiation and other growth and development processes. Appears to regulate genes that are expressed in asexual and sexual spore pathways. In Neurospora crassa (strain ATCC 24698 / 74-OR23-1A / CBS 708.71 / DSM 1257 / FGSC 987), this protein is Transcriptional repressor rco-1 (rco-1).